The sequence spans 202 residues: dITP/XTP pyrophosphatase (202 aa).

Residue 7-12 (SRNEAK) participates in substrate binding. The active-site Proton acceptor is the D68. Residue D68 coordinates Mg(2+). Substrate is bound by residues S69, 156-159 (FGYD), K179, and 184-185 (HR).

Belongs to the HAM1 NTPase family. In terms of assembly, homodimer. It depends on Mg(2+) as a cofactor.

It catalyses the reaction XTP + H2O = XMP + diphosphate + H(+). The enzyme catalyses dITP + H2O = dIMP + diphosphate + H(+). The catalysed reaction is ITP + H2O = IMP + diphosphate + H(+). In terms of biological role, pyrophosphatase that catalyzes the hydrolysis of nucleoside triphosphates to their monophosphate derivatives, with a high preference for the non-canonical purine nucleotides XTP (xanthosine triphosphate), dITP (deoxyinosine triphosphate) and ITP. Seems to function as a house-cleaning enzyme that removes non-canonical purine nucleotides from the nucleotide pool, thus preventing their incorporation into DNA/RNA and avoiding chromosomal lesions. In Frankia alni (strain DSM 45986 / CECT 9034 / ACN14a), this protein is dITP/XTP pyrophosphatase.